Consider the following 119-residue polypeptide: Large ribosomal subunit protein bL20 (119 aa).

The protein belongs to the bacterial ribosomal protein bL20 family.

In terms of biological role, binds directly to 23S ribosomal RNA and is necessary for the in vitro assembly process of the 50S ribosomal subunit. It is not involved in the protein synthesizing functions of that subunit. The sequence is that of Large ribosomal subunit protein bL20 from Azoarcus sp. (strain BH72).